The chain runs to 938 residues: Bifunctional uridylyltransferase/uridylyl-removing enzyme (938 aa).

The uridylyltransferase stretch occupies residues Met-1–Leu-379. Residues Asp-380 to Ala-733 form a uridylyl-removing region. The HD domain occupies Val-495–Leu-617. ACT domains follow at residues Glu-734–Arg-813 and Val-845–Ala-924.

Belongs to the GlnD family. Mg(2+) serves as cofactor.

It catalyses the reaction [protein-PII]-L-tyrosine + UTP = [protein-PII]-uridylyl-L-tyrosine + diphosphate. The enzyme catalyses [protein-PII]-uridylyl-L-tyrosine + H2O = [protein-PII]-L-tyrosine + UMP + H(+). Its activity is regulated as follows. Uridylyltransferase (UTase) activity is inhibited by glutamine, while glutamine activates uridylyl-removing (UR) activity. Modifies, by uridylylation and deuridylylation, the PII regulatory proteins (GlnB and homologs), in response to the nitrogen status of the cell that GlnD senses through the glutamine level. Under low glutamine levels, catalyzes the conversion of the PII proteins and UTP to PII-UMP and PPi, while under higher glutamine levels, GlnD hydrolyzes PII-UMP to PII and UMP (deuridylylation). Thus, controls uridylylation state and activity of the PII proteins, and plays an important role in the regulation of nitrogen assimilation and metabolism. The polypeptide is Bifunctional uridylyltransferase/uridylyl-removing enzyme (Phenylobacterium zucineum (strain HLK1)).